We begin with the raw amino-acid sequence, 356 residues long: Sorbitol dehydrogenase (356 aa).

Residue Cys44 coordinates Zn(2+). Position 50 (Tyr50) interacts with substrate. Residues His69 and Glu70 each coordinate Zn(2+). Position 155 (Glu155) interacts with substrate. 3 residues coordinate NAD(+): Ile183, Asp203, and Arg208. Phosphoserine occurs at positions 210 and 224. NAD(+)-binding positions include 272-274 and 296-298; these read VGL and VFR. Substrate contacts are provided by Arg298 and Tyr299.

Belongs to the zinc-containing alcohol dehydrogenase family. In terms of assembly, homotetramer. The cofactor is Zn(2+). As to expression, expressed in lens.

The protein localises to the mitochondrion membrane. Its subcellular location is the cell projection. It is found in the cilium. The protein resides in the flagellum. It carries out the reaction xylitol + NAD(+) = D-xylulose + NADH + H(+). The catalysed reaction is keto-D-fructose + NADH + H(+) = D-sorbitol + NAD(+). It catalyses the reaction L-iditol + NAD(+) = keto-L-sorbose + NADH + H(+). With respect to regulation, inhibited in vitro by metal chelators such as EDTA and 1,10-phenanthroline. Its function is as follows. Polyol dehydrogenase that catalyzes the reversible NAD(+)-dependent oxidation of various sugar alcohols. Is mostly active with xylitol, D-sorbitol (D-glucitol) and L-iditol as substrates, leading to the C2-oxidized products D-xylulose, D-fructose and L-sorbose, respectively. Is a key enzyme in the polyol pathway that interconverts glucose and fructose via sorbitol, which constitutes an important alternate route for glucose metabolism. May play a role in sperm motility by using sorbitol as an alternative energy source for sperm motility. Cannot use NADP(+) as the electron acceptor. Has no activity on ethanol, methanol, glycerol, galactitol and fructose 6-phosphate. The sequence is that of Sorbitol dehydrogenase (SORD) from Bos taurus (Bovine).